The primary structure comprises 218 residues: Chymotrypsin-2 (218 aa).

A Peptidase S1 domain is found at 1 to 218; that stretch reads IVGGTDAPRG…FLDWIQKNQL (218 aa). A disulfide bond links cysteine 25 and cysteine 40. Residues histidine 39 and aspartate 84 each act as charge relay system in the active site. 2 disulfide bridges follow: cysteine 148–cysteine 161 and cysteine 171–cysteine 195. Serine 175 serves as the catalytic Charge relay system.

The protein belongs to the peptidase S1 family.

The protein resides in the secreted. The protein localises to the extracellular space. It carries out the reaction Preferential cleavage: Tyr-|-Xaa, Trp-|-Xaa, Phe-|-Xaa, Leu-|-Xaa.. In Vespa crabro (European hornet), this protein is Chymotrypsin-2.